Consider the following 1012-residue polypeptide: Formate dehydrogenase 2 subunit alpha (cytochrome c-553) (1012 aa).

The segment at residues 1-33 is a signal peptide (tat-type signal); that stretch reads MKTTRRSFLKLVGVSVVGLSLGQLGFDLEDAQA. A 4Fe-4S Mo/W bis-MGD-type domain is found at 43 to 99; the sequence is AKEVGTVCPFCSVCCQVIAYVRNGKLVSTEGDPDFPVNEGALCAKGAALFSMYTNPH. [4Fe-4S] cluster is bound by residues C50, C53, C57, and C85. U189 contacts W-bis(molybdopterin guanine dinucleotide). Residue U189 is a non-standard amino acid, selenocysteine. Ca(2+)-binding residues include T389, R391, K394, L424, and N426.

The protein belongs to the prokaryotic molybdopterin-containing oxidoreductase family. In terms of assembly, heterotrimer of cytochrome c3 FDH2C and formate dehydrogenase FDH2 alpha and beta subunits that forms the FdhABC(3) complex. The cofactor is [4Fe-4S] cluster. W-bis(molybdopterin guanine dinucleotide) is required as a cofactor. In terms of processing, predicted to be exported by the Tat system. The position of the signal peptide cleavage has not been experimentally proven.

The protein localises to the periplasm. It carries out the reaction 2 Fe(III)-[cytochrome c553] + formate = 2 Fe(II)-[cytochrome c553] + CO2 + H(+). Its function is as follows. Alpha chain of the formate dehydrogenase (FDH) that catalyzes the reversible two-electron oxidation of formate to carbon dioxide. The alpha subunit of formate dehydrogenase forms the active site. This Nitratidesulfovibrio vulgaris (strain ATCC 29579 / DSM 644 / CCUG 34227 / NCIMB 8303 / VKM B-1760 / Hildenborough) (Desulfovibrio vulgaris) protein is Formate dehydrogenase 2 subunit alpha (cytochrome c-553).